Here is an 86-residue protein sequence, read N- to C-terminus: Putative membrane protein insertion efficiency factor (86 aa).

The disordered stretch occupies residues 67-86 (LHEGGDDPVPPVKNNDNREH).

Belongs to the UPF0161 family.

It localises to the cell inner membrane. Could be involved in insertion of integral membrane proteins into the membrane. This Photorhabdus laumondii subsp. laumondii (strain DSM 15139 / CIP 105565 / TT01) (Photorhabdus luminescens subsp. laumondii) protein is Putative membrane protein insertion efficiency factor.